Reading from the N-terminus, the 366-residue chain is GTPase Obg (366 aa).

An Obg domain is found at 1–159 (MKFLDEAKVY…KTIWLRLKLI (159 aa)). The 168-residue stretch at 160–327 (ADAGLVGLPN…VLRALRDVIV (168 aa)) folds into the OBG-type G domain. GTP contacts are provided by residues 166-173 (GLPNAGKS), 191-195 (FTTLH), 212-215 (DIPG), 279-282 (SQID), and 308-310 (SAI). Positions 173 and 193 each coordinate Mg(2+). The segment at 333-366 (DDETISQRPKKHRHKLEDRPQHENGPEESEEGEE) is disordered. A compositionally biased stretch (basic and acidic residues) spans 347-357 (KLEDRPQHENG).

Belongs to the TRAFAC class OBG-HflX-like GTPase superfamily. OBG GTPase family. Monomer. Mg(2+) is required as a cofactor.

It is found in the cytoplasm. Its function is as follows. An essential GTPase which binds GTP, GDP and possibly (p)ppGpp with moderate affinity, with high nucleotide exchange rates and a fairly low GTP hydrolysis rate. Plays a role in control of the cell cycle, stress response, ribosome biogenesis and in those bacteria that undergo differentiation, in morphogenesis control. This chain is GTPase Obg, found in Allorhizobium ampelinum (strain ATCC BAA-846 / DSM 112012 / S4) (Agrobacterium vitis (strain S4)).